The chain runs to 241 residues: Phosphoadenosine 5'-phosphosulfate reductase (241 aa).

Residues 221–241 form a disordered region; it reads GADPRSGRWRGKAKTECGLHA. The Nucleophile; cysteine thiosulfonate intermediate role is filled by Cys-237.

The protein belongs to the PAPS reductase family. CysH subfamily.

It localises to the cytoplasm. It catalyses the reaction [thioredoxin]-disulfide + sulfite + adenosine 3',5'-bisphosphate + 2 H(+) = [thioredoxin]-dithiol + 3'-phosphoadenylyl sulfate. Its pathway is sulfur metabolism; hydrogen sulfide biosynthesis; sulfite from sulfate: step 3/3. Functionally, catalyzes the formation of sulfite from phosphoadenosine 5'-phosphosulfate (PAPS) using thioredoxin as an electron donor. In Gloeobacter violaceus (strain ATCC 29082 / PCC 7421), this protein is Phosphoadenosine 5'-phosphosulfate reductase.